Reading from the N-terminus, the 368-residue chain is MSESQKKVIVGMSGGVDSSVSAYLLLQQGYKVEGLFMKNWEEDDGEEYCTAAADLADAQAVCDKLGIELHTVNFAAEYWDNVFELFLEEYKAGRTPNPDILCNKEIKFKAFLEFAAEDLGADYIATGHYVRRADVDGKSQLLRGLDGNKDQSYFLYTLSHEQIAQSLFPVGELEKPQVRKIAEELDLITAKKKDSTGICFIGERKFRDFLGRYLPAQPGKILTVDGEEIGTHQGLMYHTLGQRKGLGIGGTKEGSEDPWYVVDKDVENNILIVAQGHDHPRLMSVGLIAQQLHWVNREPLQGTLRCTVKTRYRQTDIPCTVTALDEDRIEVRFDEPVAAVTPGQSAVFYLGEVCLGGGIIEQRLPLQS.

Residues 11–18 (GMSGGVDS) and M37 contribute to the ATP site. Positions 97 to 99 (NPD) are interaction with target base in tRNA. C102 (nucleophile) is an active-site residue. The cysteines at positions 102 and 199 are disulfide-linked. G127 contributes to the ATP binding site. Residues 149-151 (KDQ) are interaction with tRNA. C199 (cysteine persulfide intermediate) is an active-site residue. An interaction with tRNA region spans residues 311-312 (RY).

The protein belongs to the MnmA/TRMU family. In terms of assembly, interacts with TusE.

The protein resides in the cytoplasm. The enzyme catalyses S-sulfanyl-L-cysteinyl-[protein] + uridine(34) in tRNA + AH2 + ATP = 2-thiouridine(34) in tRNA + L-cysteinyl-[protein] + A + AMP + diphosphate + H(+). Functionally, catalyzes the 2-thiolation of uridine at the wobble position (U34) of tRNA(Lys), tRNA(Glu) and tRNA(Gln), leading to the formation of s(2)U34, the first step of tRNA-mnm(5)s(2)U34 synthesis. Sulfur is provided by IscS, via a sulfur-relay system. Binds ATP and its substrate tRNAs. In Klebsiella pneumoniae subsp. pneumoniae (strain ATCC 700721 / MGH 78578), this protein is tRNA-specific 2-thiouridylase MnmA.